A 327-amino-acid polypeptide reads, in one-letter code: Chlorophenol reductase (327 aa).

An N-terminal signal peptide occupies residues 1-24 (MKKTLGIILSISLAFSVLALPIFA). Positions 65-110 (TYYTVVSGDFFWQIAAKHGLTIDALAKLNPQIKNVNLIFPGQKILV) constitute a LysM domain.

The cofactor is cob(I)alamin.

It is found in the secreted. The protein localises to the cell wall. Its subcellular location is the cell membrane. Its activity is regulated as follows. Inhibited by sulfide and to a lesser extent by nitrite. In terms of biological role, reductive dechlorination of ortho-chlorophenols. Dechlorinates in the ortho position with respect to the hydroxyl group. The protein is Chlorophenol reductase of Desulfitobacterium hafniense (Desulfitobacterium frappieri).